A 341-amino-acid polypeptide reads, in one-letter code: THO complex subunit 6 (341 aa).

7 WD repeats span residues 22-61, 74-112, 124-165, 166-205, 215-254, 256-293, and 295-339; these read RLHMTIFSQSVSPCGKFLAAGNNYGQIAIFSLSSALSSEA, AHDGPVYSMVSTDRHLLSAGDGEVKAWLWAEMLKKGCKE, LEVP…RVLR, GHTDYIHCLALRERSPEVLSGGEDGAVRLWDLRTAKEVQT, SRPHNGRWIGCLATDSDWMVCGGGPALTLWHLRSSTPTTI, PIRAPQKHVTFYQDLILSAGQGRCVNQWQLSGELKAQV, and GSSP…AFSL. Position 180 is a phosphoserine (Ser-180).

The protein belongs to the WD repeat THOC6 family. As to quaternary structure, component of the THO subcomplex, which is composed of THOC1, THOC2, THOC3, THOC5, THOC6 and THOC7. The THO subcomplex interacts with DDX39B to form the THO-DDX39B complex which multimerizes into a 28-subunit tetrameric assembly. Component of the transcription/export (TREX) complex at least composed of ALYREF/THOC4, DDX39B, SARNP/CIP29, CHTOP and the THO subcomplex; in the complex interacts with THOC5; together with THOC5 and THOC7, plays a key structural role in the oligomerization of the THO-DDX39B complex. TREX seems to have a dynamic structure involving ATP-dependent remodeling.

It is found in the nucleus. The protein localises to the nucleus speckle. Its function is as follows. Component of the THO subcomplex of the TREX complex which is thought to couple mRNA transcription, processing and nuclear export, and which specifically associates with spliced mRNA and not with unspliced pre-mRNA. Plays a key structural role in the oligomerization of the THO-DDX39B complex. TREX is recruited to spliced mRNAs by a transcription-independent mechanism, binds to mRNA upstream of the exon-junction complex (EJC) and is recruited in a splicing- and cap-dependent manner to a region near the 5' end of the mRNA where it functions in mRNA export to the cytoplasm via the TAP/NXF1 pathway. Plays a role in apoptosis negative control involved in brain development. (Microbial infection) The TREX complex is essential for the export of Kaposi's sarcoma-associated herpesvirus (KSHV) intronless mRNAs and infectious virus production. The polypeptide is THO complex subunit 6 (THOC6) (Homo sapiens (Human)).